The primary structure comprises 532 residues: Protein DETOXIFICATION 51 (532 aa).

A run of 12 helical transmembrane segments spans residues 65 to 85, 98 to 118, 142 to 162, 176 to 196, 208 to 228, 238 to 258, 290 to 310, 316 to 336, 358 to 378, 395 to 415, 439 to 459, and 461 to 481; these read FPIA…MFFL, LAIA…ALGM, VVFL…VGKI, AQTY…LHPI, PVTL…LFLV, VAVA…CYVW, VSVC…GLLV, VAAM…PSSL, LTAT…AAFA, ILQL…GNCP, AFYL…GIGF, and GLWV…MYVV.

The protein belongs to the multi antimicrobial extrusion (MATE) (TC 2.A.66.1) family. Expressed in the meristematic regions. Mainly detected in tissues where cells were actively dividing, such as leaf primordia and young leaves, the junction between lateral root and the primary root, root cap, hydathodes, the junction between secondary inflorescence and the main inflorescence, young stamen and young siliques. Highly expressed at the junction between the hypocotyl and the root, and at the marginal areas of cotyledons and true leaves, coinciding with the locations of the hydathode. Also highly expressed at the basal regions of the newly emerged lateral roots. In the floral organs, mostly expressed at the style of the pistil.

It localises to the endosome membrane. The protein resides in the late endosome membrane. In terms of biological role, functions as a multidrug and toxin extrusion transporter that negatively regulates plant disease resistance. Plays an important role in maintaining normal plant architecture, possibly by regulating local auxin biosynthesis. May act as a negative regulator of hypocotyl cell elongation in the light. In Arabidopsis thaliana (Mouse-ear cress), this protein is Protein DETOXIFICATION 51.